We begin with the raw amino-acid sequence, 333 residues long: tRNA-dihydrouridine(16) synthase (333 aa).

Residues 19–21 (PMQ) and Q80 contribute to the FMN site. The Proton donor role is filled by C110. FMN contacts are provided by residues K151, 211–213 (NGD), and 235–236 (GR).

Belongs to the Dus family. DusC subfamily. FMN serves as cofactor.

It carries out the reaction 5,6-dihydrouridine(16) in tRNA + NADP(+) = uridine(16) in tRNA + NADPH + H(+). It catalyses the reaction 5,6-dihydrouridine(16) in tRNA + NAD(+) = uridine(16) in tRNA + NADH + H(+). Its function is as follows. Catalyzes the synthesis of 5,6-dihydrouridine (D), a modified base found in the D-loop of most tRNAs, via the reduction of the C5-C6 double bond in target uridines. Specifically modifies U16 in tRNAs. This Neisseria meningitidis serogroup B (strain ATCC BAA-335 / MC58) protein is tRNA-dihydrouridine(16) synthase.